The chain runs to 614 residues: WD repeat-containing protein 26 (614 aa).

Low complexity-rich tracts occupy residues 1-19 and 34-44; these read MQAN…AGSG and SNGVLSSNNGL. The disordered stretch occupies residues 1 to 65; it reads MQANGAAAAA…PGGRKKKRLS (65 aa). A LisH domain is found at 67–99; the sequence is ADEDVIRLIGQHLHGLGLNQTVDLLMQESGCRL. One can recognise a CTLH domain in the interval 100–184; the sequence is EHPSATKFRN…EYLEDGKVLE (85 aa). WD repeat units lie at residues 306 to 345, 352 to 391, 397 to 437, 477 to 516, 519 to 561, and 564 to 604; these read EHCN…HQLK, GHAY…GELR, SHED…DSWE, QEDH…LVRK, GVTQ…PIAE, and GHTR…DNQE.

As to quaternary structure, forms homooligomers. Identified in the CTLH complex that contains at least MAEA, RMND5A (or alternatively its paralog RMND5B), GID8, WDR26, and RANBP9 and/or RANBP10. Interacts with DDB1-CUL4A/B E3 ligase complexes.

Its subcellular location is the cytoplasm. It localises to the nucleus. The protein localises to the mitochondrion. In terms of biological role, G-beta-like protein involved in cell signal transduction. Acts as a negative regulator in MAPK signaling pathway. Functions as a scaffolding protein to promote G beta:gamma-mediated PLCB2 plasma membrane translocation and subsequent activation in leukocytes. Core component of the CTLH E3 ubiquitin-protein ligase complex that mediates ubiquitination and subsequent proteasomal degradation of target proteins. Acts as a negative regulator of the canonical Wnt signaling pathway through preventing ubiquitination of beta-catenin CTNNB1 by the beta-catenin destruction complex, thus negatively regulating CTNNB1 degradation. Serves as a scaffold to coordinate PI3K/AKT pathway-driven cell growth and migration. Protects cells from oxidative stress-induced apoptosis via the down-regulation of AP-1 transcriptional activity as well as by inhibiting cytochrome c release from mitochondria. Also protects cells by promoting hypoxia-mediated autophagy and mitophagy. This is WD repeat-containing protein 26 (wdr26) from Xenopus tropicalis (Western clawed frog).